We begin with the raw amino-acid sequence, 138 residues long: Small ribosomal subunit protein uS9 (138 aa).

Positions 100–118 (PENRPPLKTEGYLTRDPRA) are enriched in basic and acidic residues. Positions 100 to 138 (PENRPPLKTEGYLTRDPRAKERKKYGLHKARKAPQYSKR) are disordered. The span at 119–138 (KERKKYGLHKARKAPQYSKR) shows a compositional bias: basic residues.

The protein belongs to the universal ribosomal protein uS9 family.

This is Small ribosomal subunit protein uS9 from Trichormus variabilis (strain ATCC 29413 / PCC 7937) (Anabaena variabilis).